Here is a 427-residue protein sequence, read N- to C-terminus: tRNA(Ile)-lysidine synthase (427 aa).

18–23 lines the ATP pocket; sequence SGGLDS.

This sequence belongs to the tRNA(Ile)-lysidine synthase family.

It is found in the cytoplasm. The catalysed reaction is cytidine(34) in tRNA(Ile2) + L-lysine + ATP = lysidine(34) in tRNA(Ile2) + AMP + diphosphate + H(+). Functionally, ligates lysine onto the cytidine present at position 34 of the AUA codon-specific tRNA(Ile) that contains the anticodon CAU, in an ATP-dependent manner. Cytidine is converted to lysidine, thus changing the amino acid specificity of the tRNA from methionine to isoleucine. The polypeptide is tRNA(Ile)-lysidine synthase (Pseudomonas putida (strain ATCC 47054 / DSM 6125 / CFBP 8728 / NCIMB 11950 / KT2440)).